The following is a 288-amino-acid chain: MSSSMWYIMQSIQSKYSLSERLIRTIAAIRSFPHDNVEDLIRGGADVNCTHGTLKPLHCACMVSDADCVELLLEKGAEVNALDGYNRTALHYAAEKDEACVEVLLEYGANPNALDGNRDTPLHWAAFKNNAECVRALLESGASVNALDYNNDTPLSWAAMKGNLESVSILLDYGAEVRVINLIGQTPISRLVALLVRGLGTEKEDSCFELLHRAVGHFELRKNGTMPREVARDPQLCEKLTVLCSAPGTLKTLARYAVRRSLGLQYLPDAVKGLPLPASLKEYLLLLE.

S17 carries the phosphoserine modification. 4 ANK repeats span residues 52-81, 85-113, 117-146, and 150-179; these read GTLK…EVNA, YNRT…NPNA, NRDT…SVNA, and NNDT…EVRV. Residues 235 to 288 form the SOCS box domain; the sequence is QLCEKLTVLCSAPGTLKTLARYAVRRSLGLQYLPDAVKGLPLPASLKEYLLLLE.

Belongs to the ankyrin SOCS box (ASB) family. In terms of assembly, interacts with TBK1; this interaction promotes TBK1 proteasomal degradation. Phosphorylated by TBK1. As to expression, highest level of expression in skeletal muscle. Also expressed in heart, brain, placenta, liver, kidney and pancreas.

The protein localises to the cytoplasm. Its pathway is protein modification; protein ubiquitination. Functionally, may be a substrate-recognition component of a SCF-like ECS (Elongin-Cullin-SOCS-box protein) E3 ubiquitin-protein ligase complex which mediates the ubiquitination and subsequent proteasomal degradation of target proteins. Inhibits IFN-beta production through the IRF3 signaling pathway by targeting TBK1 via 'Lys-48'-linked ubiquitination, leading to its proteasomal degradation. The polypeptide is Ankyrin repeat and SOCS box protein 8 (ASB8) (Homo sapiens (Human)).